The following is a 1380-amino-acid chain: DNA-directed RNA polymerase subunit beta (1380 aa).

This sequence belongs to the RNA polymerase beta chain family. The RNAP catalytic core consists of 2 alpha, 1 beta, 1 beta' and 1 omega subunit. When a sigma factor is associated with the core the holoenzyme is formed, which can initiate transcription.

The catalysed reaction is RNA(n) + a ribonucleoside 5'-triphosphate = RNA(n+1) + diphosphate. Its function is as follows. DNA-dependent RNA polymerase catalyzes the transcription of DNA into RNA using the four ribonucleoside triphosphates as substrates. This is DNA-directed RNA polymerase subunit beta from Nitrobacter winogradskyi (strain ATCC 25391 / DSM 10237 / CIP 104748 / NCIMB 11846 / Nb-255).